The following is a 423-amino-acid chain: Large ribosomal subunit protein mL37 (423 aa).

A mitochondrion-targeting transit peptide spans 1–29 (MALASGPARRALAGSGQLGLGGFGAPRRG).

It belongs to the mitochondrion-specific ribosomal protein mL37 family. As to quaternary structure, component of the mitochondrial large ribosomal subunit (mt-LSU). Mature mammalian 55S mitochondrial ribosomes consist of a small (28S) and a large (39S) subunit. The 28S small subunit contains a 12S ribosomal RNA (12S mt-rRNA) and 30 different proteins. The 39S large subunit contains a 16S rRNA (16S mt-rRNA), a copy of mitochondrial valine transfer RNA (mt-tRNA(Val)), which plays an integral structural role, and 52 different proteins. mL37 forms a heterodimer with mL65.

The protein resides in the mitochondrion. This chain is Large ribosomal subunit protein mL37 (MRPL37), found in Homo sapiens (Human).